Consider the following 404-residue polypeptide: Glycerol-1-phosphate dehydrogenase [NAD(P)+] (404 aa).

NAD(+) contacts are provided by residues aspartate 56, 118–122, and 140–143; these read GTIHD and TAPS. Aspartate 145 is a binding site for substrate. NAD(+) is bound at residue serine 149. A substrate-binding site is contributed by aspartate 192. Residues aspartate 192 and histidine 272 each coordinate Ni(2+). Histidine 276 lines the substrate pocket. Ni(2+) is bound at residue histidine 292.

Belongs to the glycerol-1-phosphate dehydrogenase family. Homodimer. Ni(2+) serves as cofactor.

Its subcellular location is the cytoplasm. It catalyses the reaction sn-glycerol 1-phosphate + NAD(+) = dihydroxyacetone phosphate + NADH + H(+). The catalysed reaction is sn-glycerol 1-phosphate + NADP(+) = dihydroxyacetone phosphate + NADPH + H(+). Catalyzes the NAD(P)H-dependent reduction of dihydroxyacetonephosphate (DHAP or glycerone phosphate) to glycerol 1-phosphate (G1P). The G1P thus generated is probably used for the synthesis of phosphoglycerolipids in Gram-positive bacterial species. In Geobacillus stearothermophilus (Bacillus stearothermophilus), this protein is Glycerol-1-phosphate dehydrogenase [NAD(P)+].